Reading from the N-terminus, the 195-residue chain is ATP-dependent Clp protease proteolytic subunit (195 aa).

The Nucleophile role is filled by serine 98. Histidine 123 is an active-site residue.

The protein belongs to the peptidase S14 family. As to quaternary structure, fourteen ClpP subunits assemble into 2 heptameric rings which stack back to back to give a disk-like structure with a central cavity, resembling the structure of eukaryotic proteasomes.

Its subcellular location is the cytoplasm. It catalyses the reaction Hydrolysis of proteins to small peptides in the presence of ATP and magnesium. alpha-casein is the usual test substrate. In the absence of ATP, only oligopeptides shorter than five residues are hydrolyzed (such as succinyl-Leu-Tyr-|-NHMec, and Leu-Tyr-Leu-|-Tyr-Trp, in which cleavage of the -Tyr-|-Leu- and -Tyr-|-Trp bonds also occurs).. Functionally, cleaves peptides in various proteins in a process that requires ATP hydrolysis. Has a chymotrypsin-like activity. Plays a major role in the degradation of misfolded proteins. This is ATP-dependent Clp protease proteolytic subunit from Staphylococcus aureus (strain Mu3 / ATCC 700698).